Consider the following 287-residue polypeptide: Hydroxysteroid 11-beta-dehydrogenase 1-like protein (287 aa).

Residues 1-22 (MKLYAKLLLCSICVAFIAVRWS) form the signal peptide. NADP(+)-binding positions include 40 to 66 (GAST…TARR), 91 to 92 (DM), and 118 to 120 (NHI). Residue S169 participates in substrate binding. Y182 (proton acceptor) is an active-site residue. NADP(+)-binding positions include 182–186 (YASTK) and 215–221 (GLIDTDS).

The protein belongs to the short-chain dehydrogenases/reductases (SDR) family.

It is found in the secreted. It carries out the reaction cortisone + NADPH + H(+) = cortisol + NADP(+). Its function is as follows. Unidirectional NADP(+)-dependent cortisol dehydrogenase (in vitro). The sequence is that of Hydroxysteroid 11-beta-dehydrogenase 1-like protein (hsd11b1l) from Danio rerio (Zebrafish).